A 243-amino-acid polypeptide reads, in one-letter code: MSKTHFGFQSVDEQDKAQKVAGVFHSVAANYDLMNDLMSGGLHRAWKMFTIAQANVRPGYKVLDIAGGTGDLSKAFAKQAGETGEVWHTDINESMLRVGRDRLLDKGVITPALLCDAEKIPFPDNYFDVVTVAFGLRNMTHKDIALAEMRRVLKPAGRLLVLEFSKVWDPLKKVYDVYSFKVLPWLGEHFAKDAGSYQYLAESIRMHPDQETLKTMMEQAGLDGVKYYNLSAGVVALHVGTKY.

S-adenosyl-L-methionine contacts are provided by residues T69, D90, and 116-117 (DA).

It belongs to the class I-like SAM-binding methyltransferase superfamily. MenG/UbiE family.

It catalyses the reaction a 2-demethylmenaquinol + S-adenosyl-L-methionine = a menaquinol + S-adenosyl-L-homocysteine + H(+). The enzyme catalyses a 2-methoxy-6-(all-trans-polyprenyl)benzene-1,4-diol + S-adenosyl-L-methionine = a 5-methoxy-2-methyl-3-(all-trans-polyprenyl)benzene-1,4-diol + S-adenosyl-L-homocysteine + H(+). It functions in the pathway quinol/quinone metabolism; menaquinone biosynthesis; menaquinol from 1,4-dihydroxy-2-naphthoate: step 2/2. The protein operates within cofactor biosynthesis; ubiquinone biosynthesis. Its function is as follows. Methyltransferase required for the conversion of demethylmenaquinol (DMKH2) to menaquinol (MKH2) and the conversion of 2-polyprenyl-6-methoxy-1,4-benzoquinol (DDMQH2) to 2-polyprenyl-3-methyl-6-methoxy-1,4-benzoquinol (DMQH2). The polypeptide is Ubiquinone/menaquinone biosynthesis C-methyltransferase UbiE (Paraburkholderia xenovorans (strain LB400)).